Here is a 435-residue protein sequence, read N- to C-terminus: ATP-dependent RNA helicase RhlB (435 aa).

The short motif at 9–37 (QKFADLGLNPQVVEGLEKKGFEFCTPIQA) is the Q motif element. Positions 40–219 (LPVLLSGQDI…FEHMHNPEHV (180 aa)) constitute a Helicase ATP-binding domain. Residue 53–60 (AQTGTGKT) coordinates ATP. Residues 165 to 168 (DEAD) carry the DEAD box motif. The region spanning 245 to 390 (ALLQTLIEEE…VSDYDSSALI (146 aa)) is the Helicase C-terminal domain. Residues 395–435 (APVRTPSARNQQRRTNTGGARSGDRKSNNRRPRQPRQHKEA) are disordered. The segment covering 401–413 (SARNQQRRTNTGG) has biased composition (polar residues). A compositionally biased stretch (basic residues) spans 422–435 (NNRRPRQPRQHKEA).

Belongs to the DEAD box helicase family. RhlB subfamily. In terms of assembly, component of the RNA degradosome, which is a multiprotein complex involved in RNA processing and mRNA degradation.

It is found in the cytoplasm. The enzyme catalyses ATP + H2O = ADP + phosphate + H(+). Functionally, DEAD-box RNA helicase involved in RNA degradation. Has RNA-dependent ATPase activity and unwinds double-stranded RNA. The polypeptide is ATP-dependent RNA helicase RhlB (Vibrio vulnificus (strain YJ016)).